The following is a 106-amino-acid chain: U1-lycotoxin-Ls1b (106 aa).

Positions 1 to 19 (MKVLVVVALLVTLISYSSS) are cleaved as a signal peptide. A propeptide spanning residues 20–40 (EGIDDLEADELLSLMANEQTR) is cleaved from the precursor. 4 disulfide bridges follow: cysteine 43–cysteine 58, cysteine 50–cysteine 67, cysteine 57–cysteine 85, and cysteine 69–cysteine 83.

The protein belongs to the neurotoxin 19 (CSTX) family. 04 (U1-Lctx) subfamily. Expressed by the venom gland.

It is found in the secreted. The protein is U1-lycotoxin-Ls1b of Lycosa singoriensis (Wolf spider).